Consider the following 178-residue polypeptide: Large ribosomal subunit protein uL6 (178 aa).

Belongs to the universal ribosomal protein uL6 family. Part of the 50S ribosomal subunit.

Functionally, this protein binds to the 23S rRNA, and is important in its secondary structure. It is located near the subunit interface in the base of the L7/L12 stalk, and near the tRNA binding site of the peptidyltransferase center. The polypeptide is Large ribosomal subunit protein uL6 (Streptococcus thermophilus (strain CNRZ 1066)).